Reading from the N-terminus, the 1447-residue chain is Calcium-dependent secretion activator (1447 aa).

Over residues 1–15 (MIDPSSSEEEGEDDA) the composition is skewed to acidic residues. 2 disordered regions span residues 1 to 35 (MIDPSSSEEEGEDDAVPNVSSKGRLTNTTKGTSAV) and 101 to 163 (DTGN…EEEE). Composition is skewed to polar residues over residues 18–32 (NVSSKGRLTNTTKGT) and 111–126 (GIPSGISQETLNQSVG). Residues 127–144 (SSRANSLPRPLSPSPSLT) are compositionally biased toward low complexity. Residues 145–163 (SEKHETAEPHGKHEREEEE) are compositionally biased toward basic and acidic residues. The C2 domain maps to 417-547 (SKYGLQKLKR…PLSSKSPEWH (131 aa)). Positions 573 to 683 (NMKHCGYLYA…WVMAMYRATG (111 aa)) constitute a PH domain. An MHD1 domain is found at 970–1157 (VDMDRVLSEQ…DMIEQCIQRT (188 aa)). Over residues 1386–1395 (REGEEEDNGD) the composition is skewed to acidic residues. The segment at 1386 to 1406 (REGEEEDNGDESTSNIPRGLP) is disordered.

As to expression, restricted to the nervous system at all stages of development and highly localized at synapses (at protein level).

It localises to the cytoplasmic vesicle membrane. It is found in the synapse. In terms of biological role, calcium-binding protein involved in exocytosis of vesicles filled with neurotransmitters and neuropeptides. May specifically mediate the Ca(2+)-dependent exocytosis of large dense-core vesicles (DCVs) and other dense-core vesicles. However, it probably also participates in small clear synaptic vesicles (SVs) exocytosis and it is unclear whether its function is related to Ca(2+) triggering. The sequence is that of Calcium-dependent secretion activator from Drosophila melanogaster (Fruit fly).